The following is a 66-amino-acid chain: KEGYPVDWGNCKYECMSDAYCKDLCADRKAKSGYCYKLNWSCYCEGLPDDSPIKTNGHCRPGGRRK.

Positions 1 to 60 constitute an LCN-type CS-alpha/beta domain; that stretch reads KEGYPVDWGNCKYECMSDAYCKDLCADRKAKSGYCYKLNWSCYCEGLPDDSPIKTNGHCR. Disulfide bonds link Cys11/Cys59, Cys15/Cys35, Cys21/Cys42, and Cys25/Cys44.

The protein belongs to the long (4 C-C) scorpion toxin superfamily. Sodium channel inhibitor family. Alpha subfamily. Expressed by the venom gland.

It is found in the secreted. Alpha toxins bind voltage-independently at site-3 of sodium channels (Nav) and inhibit the inactivation of the activated channels, thereby blocking neuronal transmission. This chain is Putative alpha-neurotoxin RjAa44, found in Rhopalurus junceus (Caribbean blue scorpion).